The sequence spans 95 residues: Parvalbumin beta 3 (95 aa).

Ala1 is subject to N-acetylalanine. 2 consecutive EF-hand domains span residues 39–66 (FFAIIDQDHSGFIEEDELKLFLQTFSAG) and 77–95 (DVDGDGMIGVDEFVALVKA). Residues Asp44, Asp46, Ser48, Phe50, Glu52, Glu55, Asp77, Asp79, Asp81, Met83, and Glu88 each coordinate Ca(2+).

The protein belongs to the parvalbumin family.

Its function is as follows. In muscle, parvalbumin is thought to be involved in relaxation after contraction. It binds two calcium ions. The protein is Parvalbumin beta 3 of Merluccius paradoxus (Deep-water Cape hake).